Here is a 74-residue protein sequence, read N- to C-terminus: Cytochrome c oxidase subunit 2 (74 aa).

Residues 1–14 (MAHPMQLGFQDAAS) are Mitochondrial intermembrane-facing. A helical membrane pass occupies residues 15–45 (PVMEELLHFHDHALMIVFLISTAVLYIIVVT). At 46–74 (VTTKLTDKYVLDAQEIEMVWTIMPAVVLI) the chain is on the mitochondrial matrix side.

This sequence belongs to the cytochrome c oxidase subunit 2 family. As to quaternary structure, component of the cytochrome c oxidase (complex IV, CIV), a multisubunit enzyme composed of 14 subunits. The complex is composed of a catalytic core of 3 subunits MT-CO1, MT-CO2 and MT-CO3, encoded in the mitochondrial DNA, and 11 supernumerary subunits COX4I, COX5A, COX5B, COX6A, COX6B, COX6C, COX7A, COX7B, COX7C, COX8 and NDUFA4, which are encoded in the nuclear genome. The complex exists as a monomer or a dimer and forms supercomplexes (SCs) in the inner mitochondrial membrane with NADH-ubiquinone oxidoreductase (complex I, CI) and ubiquinol-cytochrome c oxidoreductase (cytochrome b-c1 complex, complex III, CIII), resulting in different assemblies (supercomplex SCI(1)III(2)IV(1) and megacomplex MCI(2)III(2)IV(2)). Found in a complex with TMEM177, COA6, COX18, COX20, SCO1 and SCO2. Interacts with TMEM177 in a COX20-dependent manner. Interacts with COX20. Interacts with COX16. It depends on Cu cation as a cofactor.

It is found in the mitochondrion inner membrane. The catalysed reaction is 4 Fe(II)-[cytochrome c] + O2 + 8 H(+)(in) = 4 Fe(III)-[cytochrome c] + 2 H2O + 4 H(+)(out). Functionally, component of the cytochrome c oxidase, the last enzyme in the mitochondrial electron transport chain which drives oxidative phosphorylation. The respiratory chain contains 3 multisubunit complexes succinate dehydrogenase (complex II, CII), ubiquinol-cytochrome c oxidoreductase (cytochrome b-c1 complex, complex III, CIII) and cytochrome c oxidase (complex IV, CIV), that cooperate to transfer electrons derived from NADH and succinate to molecular oxygen, creating an electrochemical gradient over the inner membrane that drives transmembrane transport and the ATP synthase. Cytochrome c oxidase is the component of the respiratory chain that catalyzes the reduction of oxygen to water. Electrons originating from reduced cytochrome c in the intermembrane space (IMS) are transferred via the dinuclear copper A center (CU(A)) of subunit 2 and heme A of subunit 1 to the active site in subunit 1, a binuclear center (BNC) formed by heme A3 and copper B (CU(B)). The BNC reduces molecular oxygen to 2 water molecules using 4 electrons from cytochrome c in the IMS and 4 protons from the mitochondrial matrix. This Amia calva (Bowfin) protein is Cytochrome c oxidase subunit 2 (mt-co2).